The following is a 726-amino-acid chain: Catalase-peroxidase (726 aa).

Residues 1–33 form a disordered region; it reads MSTSDDIHNTTATGKCPFHQGGHDQSAGGGTTT. A cross-link (tryptophyl-tyrosyl-methioninium (Trp-Tyr) (with M-252)) is located at residues 105 to 226; sequence WHGAGTYRSI…LGATEMGLIY (122 aa). Histidine 106 serves as the catalytic Proton acceptor. The tryptophyl-tyrosyl-methioninium (Tyr-Met) (with W-105) cross-link spans 226–252; the sequence is YVNPEGPDHSGEPLSAAAAIRATFGNM. Residue histidine 267 participates in heme b binding.

This sequence belongs to the peroxidase family. Peroxidase/catalase subfamily. Homodimer or homotetramer. Requires heme b as cofactor. In terms of processing, formation of the three residue Trp-Tyr-Met cross-link is important for the catalase, but not the peroxidase activity of the enzyme.

The catalysed reaction is H2O2 + AH2 = A + 2 H2O. It carries out the reaction 2 H2O2 = O2 + 2 H2O. Functionally, bifunctional enzyme with both catalase and broad-spectrum peroxidase activity. The polypeptide is Catalase-peroxidase (Escherichia coli O1:K1 / APEC).